The chain runs to 293 residues: Formamidopyrimidine-DNA glycosylase (293 aa).

The active-site Schiff-base intermediate with DNA is P2. E3 acts as the Proton donor in catalysis. K58 (proton donor; for beta-elimination activity) is an active-site residue. Positions 104, 123, and 166 each coordinate DNA. The FPG-type zinc finger occupies 257 to 293 (KVYDREGETCKTPACGGTIKRFTQNGRSTFWCPKCQK). R283 serves as the catalytic Proton donor; for delta-elimination activity.

This sequence belongs to the FPG family. As to quaternary structure, monomer. The cofactor is Zn(2+).

The enzyme catalyses Hydrolysis of DNA containing ring-opened 7-methylguanine residues, releasing 2,6-diamino-4-hydroxy-5-(N-methyl)formamidopyrimidine.. The catalysed reaction is 2'-deoxyribonucleotide-(2'-deoxyribose 5'-phosphate)-2'-deoxyribonucleotide-DNA = a 3'-end 2'-deoxyribonucleotide-(2,3-dehydro-2,3-deoxyribose 5'-phosphate)-DNA + a 5'-end 5'-phospho-2'-deoxyribonucleoside-DNA + H(+). Its function is as follows. Involved in base excision repair of DNA damaged by oxidation or by mutagenic agents. Acts as a DNA glycosylase that recognizes and removes damaged bases. Has a preference for oxidized purines, such as 7,8-dihydro-8-oxoguanine (8-oxoG). Has AP (apurinic/apyrimidinic) lyase activity and introduces nicks in the DNA strand. Cleaves the DNA backbone by beta-delta elimination to generate a single-strand break at the site of the removed base with both 3'- and 5'-phosphates. The chain is Formamidopyrimidine-DNA glycosylase from Bradyrhizobium diazoefficiens (strain JCM 10833 / BCRC 13528 / IAM 13628 / NBRC 14792 / USDA 110).